A 363-amino-acid chain; its full sequence is Phosphate acyltransferase (363 aa).

The segment at 326-363 (ADSHPSKVNAGENAPPLASASNPSPEALPVGSLDRVEG) is disordered. Residues 337–354 (ENAPPLASASNPSPEALP) show a composition bias toward low complexity.

It belongs to the PlsX family. In terms of assembly, homodimer. Probably interacts with PlsY.

It is found in the cytoplasm. The enzyme catalyses a fatty acyl-[ACP] + phosphate = an acyl phosphate + holo-[ACP]. It participates in lipid metabolism; phospholipid metabolism. Catalyzes the reversible formation of acyl-phosphate (acyl-PO(4)) from acyl-[acyl-carrier-protein] (acyl-ACP). This enzyme utilizes acyl-ACP as fatty acyl donor, but not acyl-CoA. The chain is Phosphate acyltransferase from Synechococcus sp. (strain JA-3-3Ab) (Cyanobacteria bacterium Yellowstone A-Prime).